A 678-amino-acid chain; its full sequence is MTTPEGAMYVAWEDLTVVIPNFGEGATKRLLNGVNGCGEPNRILAIMGPSGSGKSTLLDALAGRLAGNVVMSGKVLVNGKKRRLDFGAAAYVTQEDVLLGTLTVRESISYSAHLRLPSKLTREEISDIVEATITDMGLEECSDRTIGNWHLRGISGGEKKRLSIALEVLTKPSLLFLDEPTSGLDSASAFFVVQILRNIASSGKTVVSSIHQPSGEVFALFDDLLLLSGGETVYFGEAESATKFFGEAGFPCPSRRNPSDHFLRCVNSDFDNVTAALVESRRINDSSFSLHQLHETTNTLDPLDDIPTAEIRTTLVRKFKCSLYAAASRARIQEIASIVGIVTERKKGSQTNWWKQLRILTQRSFINMSRDLGYYWMRIAVYIVLSICVGSIFFNVGRNHTNVMSTAACGGFMAGFMTFMSIGGFQSFIEEMKVFSRERLNGHYGVAVYTVSNLLSSLPFIILMCLSTSSITIYMVRFQSGGSHFFYNCLDLICAITTVESCMMMIASVVPNFLMGVMLGAGYIGIMVLSAGFFRFFPDLPMVFWRYPVSYINYGAWALQGAYKNEMIGVEYDSPLPLVPKMKGELILQTVLGINPESSKWLDLAVVMMILIGYRIAFFAILKFREKVFPVIHMLYTKRTLSHIQKRPSFRRMTPFPSRRYPVHHALSSQEGLNSPLH.

The ABC transporter domain maps to 10–254; the sequence is VAWEDLTVVI…FGEAGFPCPS (245 aa). 48-55 lines the ATP pocket; the sequence is GPSGSGKS. In terms of domain architecture, ABC transmembrane type-2 spans 355-567; sequence KQLRILTQRS…ALQGAYKNEM (213 aa). 6 helical membrane passes run 374 to 394, 409 to 429, 446 to 466, 490 to 510, 513 to 533, and 602 to 622; these read YYWMRIAVYIVLSICVGSIFF, CGGFMAGFMTFMSIGGFQSFI, VAVYTVSNLLSSLPFIILMCL, LDLICAITTVESCMMMIASVV, FLMGVMLGAGYIGIMVLSAGF, and LDLAVVMMILIGYRIAFFAIL. Serine 658 is modified (phosphoserine).

Belongs to the ABC transporter superfamily. ABCG family. Eye pigment precursor importer (TC 3.A.1.204) subfamily.

The protein resides in the membrane. This chain is ABC transporter G family member 13 (ABCG13), found in Arabidopsis thaliana (Mouse-ear cress).